A 417-amino-acid polypeptide reads, in one-letter code: Probable glucuronosyltransferase GUT1 (417 aa).

Residues 1–15 (MGTRRRSARARARPP) are Cytoplasmic-facing. Residues 16 to 36 (LAMPLAVLLLFACSSGVAAAA) form a helical; Signal-anchor for type II membrane protein membrane-spanning segment. The Lumenal segment spans residues 37–417 (AQGIERIKDD…EGTREDLKPW (381 aa)). N-linked (GlcNAc...) asparagine glycans are attached at residues Asn-144 and Asn-405.

It belongs to the glycosyltransferase 47 family.

The protein localises to the golgi apparatus membrane. Functionally, involved in the synthesis of glucuronoxylan hemicellulose in secondary cell walls. The protein is Probable glucuronosyltransferase GUT1 (GUT1) of Oryza sativa subsp. japonica (Rice).